The primary structure comprises 425 residues: Serine--tRNA ligase (425 aa).

Residue 233 to 235 participates in L-serine binding; that stretch reads TAE. ATP contacts are provided by residues 264 to 266 and V280; that span reads RRE. E287 provides a ligand contact to L-serine. 351–354 contacts ATP; it reads EVSS. Residue S387 participates in L-serine binding.

This sequence belongs to the class-II aminoacyl-tRNA synthetase family. Type-1 seryl-tRNA synthetase subfamily. Homodimer. The tRNA molecule binds across the dimer.

It localises to the cytoplasm. The catalysed reaction is tRNA(Ser) + L-serine + ATP = L-seryl-tRNA(Ser) + AMP + diphosphate + H(+). The enzyme catalyses tRNA(Sec) + L-serine + ATP = L-seryl-tRNA(Sec) + AMP + diphosphate + H(+). Its pathway is aminoacyl-tRNA biosynthesis; selenocysteinyl-tRNA(Sec) biosynthesis; L-seryl-tRNA(Sec) from L-serine and tRNA(Sec): step 1/1. Catalyzes the attachment of serine to tRNA(Ser). Is also able to aminoacylate tRNA(Sec) with serine, to form the misacylated tRNA L-seryl-tRNA(Sec), which will be further converted into selenocysteinyl-tRNA(Sec). The sequence is that of Serine--tRNA ligase from Gemmatimonas aurantiaca (strain DSM 14586 / JCM 11422 / NBRC 100505 / T-27).